A 327-amino-acid polypeptide reads, in one-letter code: WRKY transcription factor WRKY76 (327 aa).

A coiled-coil region spans residues 56 to 76; the sequence is AKIVEAKVTQMSEENRRLTEV. The interval 87-135 is disordered; sequence RLGLDGSASPPRPVSPLSGKKRSRESMETANSCDANSNRHQGGDADHAE. Positions 106–112 match the Nuclear localization signal motif; the sequence is KKRSRES. The segment covering 114 to 126 has biased composition (polar residues); the sequence is ETANSCDANSNRH. The WRKY DNA-binding region spans 160 to 226; that stretch reads DTSLVVKDGY…YEGEHNHPHP (67 aa).

It belongs to the WRKY group II-a family.

The protein resides in the nucleus. Transcription repressor. Interacts specifically with the W box (5'-(T)TGAC[CT]-3'), a frequently occurring elicitor-responsive cis-acting element. Regulates, probably indirectly, the activation of defense-related genes during defense response. Modulates plant innate immunity against X.oryzae pv. oryzae (Xoo). This chain is WRKY transcription factor WRKY76, found in Oryza sativa subsp. japonica (Rice).